A 318-amino-acid polypeptide reads, in one-letter code: HPr kinase/phosphorylase (318 aa).

Residues His146 and Lys167 contribute to the active site. Residue 161–168 (GESGLGKS) coordinates ATP. Ser168 contributes to the Mg(2+) binding site. Asp185 functions as the Proton acceptor; for phosphorylation activity. Proton donor; for dephosphorylation activity in the catalytic mechanism. An important for the catalytic mechanism of both phosphorylation and dephosphorylation region spans residues 209–218 (LEVRGIGLLD). Mg(2+) is bound at residue Glu210. Arg252 is a catalytic residue. The interval 273–278 (QVVAGR) is important for the catalytic mechanism of dephosphorylation.

The protein belongs to the HPrK/P family. Homohexamer. It depends on Mg(2+) as a cofactor.

It catalyses the reaction [HPr protein]-L-serine + ATP = [HPr protein]-O-phospho-L-serine + ADP + H(+). The enzyme catalyses [HPr protein]-O-phospho-L-serine + phosphate + H(+) = [HPr protein]-L-serine + diphosphate. Catalyzes the ATP- as well as the pyrophosphate-dependent phosphorylation of a specific serine residue in HPr, a phosphocarrier protein of the phosphoenolpyruvate-dependent sugar phosphotransferase system (PTS). HprK/P also catalyzes the pyrophosphate-producing, inorganic phosphate-dependent dephosphorylation (phosphorolysis) of seryl-phosphorylated HPr (P-Ser-HPr). This is HPr kinase/phosphorylase from Acidovorax sp. (strain JS42).